Consider the following 90-residue polypeptide: Bombyxin B-7 (90 aa).

The first 20 residues, 1-20 (MMKTSVMLMLVVVISLMCSG), serve as a signal peptide directing secretion. Disulfide bonds link Cys30/Cys76, Cys42/Cys89, and Cys75/Cys80. Positions 49–67 (GGAQYAPYFWTRQYLGSRG) are cleaved as a propeptide — c peptide like.

The protein belongs to the insulin family. Heterodimer of a B chain and an A chain linked by two disulfide bonds.

It is found in the secreted. Brain peptide responsible for activation of prothoracic glands to produce ecdysone in insects. The sequence is that of Bombyxin B-7 (BBXB7) from Bombyx mori (Silk moth).